A 518-amino-acid chain; its full sequence is uncharacterized protein (518 aa).

ABC transporter domains follow at residues 4–260 (LSVK…QLEA) and 324–518 (LIFE…TKVL). Residues 36-43 (GANGEGKS) and 357-364 (GANGIGKT) each bind ATP.

The protein belongs to the ABC transporter superfamily.

This is an uncharacterized protein from Bacillus subtilis (strain 168).